A 139-amino-acid chain; its full sequence is MGETIRFGISIDETLLESFDKLIDQKGYMNRSEAIRDLIRASLVELKWEAGEEETVGTVTLVYNHHVRDLSDKLTEHQHTHHDQIISALHVHLDAHNCLEVLVVRGKAREVKQIADELIGVKGVKHGKLVMTTTGEELH.

The Ni(2+) site is built by His79, His90, His92, and Cys98.

Belongs to the transcriptional regulatory CopG/NikR family. Ni(2+) is required as a cofactor.

In terms of biological role, transcriptional regulator. This is Putative nickel-responsive regulator from Geotalea uraniireducens (strain Rf4) (Geobacter uraniireducens).